Reading from the N-terminus, the 693-residue chain is Tegument protein UL47 (693 aa).

Disordered stretches follow at residues 1–32 and 48–126; these read MSAR…DGVG and ELEA…GYLG. Over residues 48 to 57 the composition is skewed to acidic residues; the sequence is ELEALEEMAG. The RNA-binding stretch occupies residues 50-75; that stretch reads EALEEMAGDEPPVRRRREGPRARRRR. The Nuclear localization signal motif lies at 63–75; the sequence is RRRREGPRARRRR. The span at 63–75 shows a compositional bias: basic residues; the sequence is RRRREGPRARRRR. Positions 647–670 match the Nuclear export signal motif; sequence SVLGPRVRVVDIMSQFRKLLMGDE.

This sequence belongs to the alphaherpesvirinae HHV-1 UL47 family. As to quaternary structure, interacts with US3 kinase. Interacts with UL31 and UL34; these interactions seem important for efficient virion nuclear egress. Interacts with UL41/VHS. Post-translationally, phosphorylated by US3. This phosphorylation is required for proper nuclear localization.

Its subcellular location is the virion tegument. The protein localises to the host nucleus. It localises to the host cytoplasm. Functionally, tegument protein that can bind to various RNA transcripts. Plays a role in the attenuation of selective viral and cellular mRNA degradation by modulating the activity of host shutoff RNase UL41/VHS. Also plays a role in the primary envelopment of virions in the perinuclear space, probably by interacting with two nuclear egress proteins UL31 and UL34. In Homo sapiens (Human), this protein is Tegument protein UL47.